The following is a 635-amino-acid chain: Kelch-like protein 31 (635 aa).

The BTB domain occupies 74–138 (CDLTVATKSK…AYSGKLTLSL (65 aa)). Residues 173 to 274 (CMYVVNIADT…TPQDLVSHVQ (102 aa)) form the BACK domain. Kelch repeat units lie at residues 318–366 (VLLT…VLDG), 367–420 (FLYV…TFNG), 421–467 (LLFA…VIDG), 469–514 (ILVS…TVGD), 516–566 (AYVL…TLNN), and 567–615 (KIYL…VVTI).

As to expression, strongly expressed in fast skeletal muscle, and weakly in heart. Not expressed in other tissues.

This Danio rerio (Zebrafish) protein is Kelch-like protein 31 (klhl31).